Consider the following 4226-residue polypeptide: Guanylate cyclase alpha (4226 aa).

Residues 1 to 104 (MSDSKKHYNE…SFIFKGLYEQ (104 aa)) are Cytoplasmic-facing. A helical transmembrane segment spans residues 105 to 125 (FLRLPNIWFLLISLLEFIPQY). At 126-131 (QNLSNY) the chain is on the extracellular side. The N-linked (GlcNAc...) asparagine glycan is linked to Asn127. The helical transmembrane segment at 132-152 (MYYSKHSSFFLLLFFICVSII) threads the bilayer. At 153–337 (KNIYEDSRRS…LGYVNKELNS (185 aa)) the chain is on the cytoplasmic side. Residues 338 to 358 (YTIIGLIFTFICVFISVLFKW) traverse the membrane as a helical segment. The Extracellular segment spans residues 359–392 (TEDDKFRNGSHFFLITVKDNICESIVKYTLLYSN). Asn366 carries N-linked (GlcNAc...) asparagine glycosylation. The helical transmembrane segment at 393-413 (IIPISILISVDLISILQSILI) threads the bilayer. Topologically, residues 414–2083 (ENDNHISTFE…FIYGSKHLYT (1670 aa)) are cytoplasmic. Disordered regions lie at residues 552-572 (EHSQ…NNIC), 832-904 (SSKN…SNND), 968-989 (INNN…KSSS), and 1740-1765 (NINK…NNSN). The segment covering 558–570 (DNNNNNDNNNNNN) has biased composition (low complexity). Acidic residues predominate over residues 838–847 (TLDDPTELIS). Basic and acidic residues predominate over residues 854 to 873 (LRDKYEHTSDKKNDTNKNRD). The segment covering 874 to 904 (GANNSNNNNNKDVSNNKNKNNNNYNYNSNND) has biased composition (low complexity). Residues 1745 to 1754 (YKYDKNDKHN) are compositionally biased toward basic and acidic residues. Over residues 1755 to 1765 (NNNNNNNNNSN) the composition is skewed to low complexity. The chain crosses the membrane as a helical span at residues 2084 to 2104 (ISIILYWNFFKNILLILPIFF). Over 2105–2119 (YQAYASWSCVKIYPE) the chain is Extracellular. A helical transmembrane segment spans residues 2120–2140 (LLYTFFSIFWVFIPIIYYMFL). The Cytoplasmic segment spans residues 2141–2169 (QHNLNYDILYNIPLFYALSRRRYNMNCFK). Residues 2170-2190 (FLPWIFEAIFYSMIIYFFAYA) traverse the membrane as a helical segment. The Extracellular segment spans residues 2191-2202 (ALKENSHLNNGE). A helical membrane pass occupies residues 2203–2223 (VITINTFGNICFIGCLLISIL). Over 2224–2235 (RLFLEGSLWSPS) the chain is Cytoplasmic. The chain crosses the membrane as a helical span at residues 2236 to 2256 (ILITCFGCFLFVFFPSLLFIC). Topologically, residues 2257–2275 (FAYLSNEYIREVFRQTFLW) are extracellular. Residues 2276 to 2296 (APLYVLLILWFSTCIISYIFI) traverse the membrane as a helical segment. At 2297-2787 (NFTKSILFPN…QIHKKNKFYK (491 aa)) the chain is on the cytoplasmic side. Residues 2477–2505 (NNDNNNDDNDNDNNNNNNNNDNYNNNDHN) are disordered. A compositionally biased stretch (low complexity) spans 2488 to 2502 (DNNNNNNNNDNYNNN). A helical membrane pass occupies residues 2788-2808 (TFTPWYRFIFLLLGVFFLYVW). Residues 2809 to 2828 (KLESSLSQLWNMPSDASTDV) are Extracellular-facing. Residues 2829–2849 (FILFLSLLLELVLLAATVTTF) form a helical membrane-spanning segment. The Cytoplasmic portion of the chain corresponds to 2850-2860 (FSNIFIENFNK). A helical transmembrane segment spans residues 2861-2881 (IISAVVILIITYHVVSYSVTH). The Extracellular portion of the chain corresponds to 2882 to 2900 (IDGVFQAVLFPLYTFVILR). A helical transmembrane segment spans residues 2901–2921 (LPFVNAVLCNIIFLGLFIIRF). Residues 2922–2930 (NGDHFLDKK) lie on the Cytoplasmic side of the membrane. The chain crosses the membrane as a helical span at residues 2931-2951 (GLAHYIPLFIGVDVFVGFVGY). The Extracellular segment spans residues 2952 to 3008 (RLEYNQRKNFLLEYSVESSRRKQREILNTMLPPFVVDEMIYSELNEEGIPISLKAED). A helical membrane pass occupies residues 3009–3029 (ISTVTIIFCDIYDFQNIVASI). The Guanylate cyclase 1 domain maps to 3013 to 3270 (TIIFCDIYDF…DTVNTASRMK (258 aa)). The Cytoplasmic segment spans residues 3030-3738 (EPTRLVEVLD…SNINSIEQAL (709 aa)). 2 disordered regions span residues 3077–3150 (EDEL…FEED) and 3201–3230 (DAND…NNKP). 2 stretches are compositionally biased toward low complexity: residues 3083-3098 (NKYS…NYYY) and 3108-3138 (NNNN…NNVN). The span at 3140-3150 (SDDDGDFFEED) shows a compositional bias: acidic residues. The span at 3201-3220 (DANDDTHNVNDSFNNDKAEN) shows a compositional bias: basic and acidic residues. A helical membrane pass occupies residues 3739–3759 (IIFLVTFVMQTLISSTVSIVF). Residues 3760–3773 (IDHKRATQTLHINY) are Extracellular-facing. A helical transmembrane segment spans residues 3774-3794 (FAYWSVRSVYTFFGFVLWLLF). The Cytoplasmic segment spans residues 3795-3811 (HYRTRPEVSSLLNIKWM). A helical membrane pass occupies residues 3812-3832 (IFFLNLLFISAACVFSIAYLW). At 3833-3840 (AISETDQT) the chain is on the extracellular side. A helical transmembrane segment spans residues 3841-3861 (TSYTIWMTNDTIEFFFYLVIL). The Cytoplasmic segment spans residues 3862–3871 (HHNTGMLFQT). The helical transmembrane segment at 3872 to 3892 (CILVDLLFITMSLTFIATSVV) threads the bilayer. Residue Lys3893 is a topological domain, extracellular. A helical membrane pass occupies residues 3894–3914 (TITTDSTVLLIPWYVAFNLIS). Residues 3915 to 4226 (TYCKESIDRR…INVNDRQSNL (312 aa)) lie on the Cytoplasmic side of the membrane. A Guanylate cyclase 2 domain is found at 3970–4104 (TFLFADICGF…IDVLTGNLME (135 aa)). Asp3975, Ile3976, and Asp4019 together coordinate Mg(2+).

This sequence in the N-terminal section; belongs to the cation transport ATPase (P-type) (TC 3.A.3) family. Type IV subfamily. The protein in the C-terminal section; belongs to the adenylyl cyclase class-4/guanylyl cyclase family. The cofactor is Mg(2+). Mn(2+) is required as a cofactor.

The protein localises to the cell membrane. It localises to the cytoplasmic vesicle membrane. The catalysed reaction is GTP = 3',5'-cyclic GMP + diphosphate. Catalyzes the synthesis of the second messenger cGMP from GTP. In asexual blood stage schizonts, required for cGMP production which is essential for PKG activation, PKG-dependent Ca(2+) release, and ultimately merozoite egress from host erythrocytes. The protein is Guanylate cyclase alpha of Plasmodium falciparum (isolate 3D7).